The following is a 106-amino-acid chain: Aspartyl/glutamyl-tRNA(Asn/Gln) amidotransferase subunit C (106 aa).

This sequence belongs to the GatC family. Heterotrimer of A, B and C subunits.

It carries out the reaction L-glutamyl-tRNA(Gln) + L-glutamine + ATP + H2O = L-glutaminyl-tRNA(Gln) + L-glutamate + ADP + phosphate + H(+). The enzyme catalyses L-aspartyl-tRNA(Asn) + L-glutamine + ATP + H2O = L-asparaginyl-tRNA(Asn) + L-glutamate + ADP + phosphate + 2 H(+). Allows the formation of correctly charged Asn-tRNA(Asn) or Gln-tRNA(Gln) through the transamidation of misacylated Asp-tRNA(Asn) or Glu-tRNA(Gln) in organisms which lack either or both of asparaginyl-tRNA or glutaminyl-tRNA synthetases. The reaction takes place in the presence of glutamine and ATP through an activated phospho-Asp-tRNA(Asn) or phospho-Glu-tRNA(Gln). The sequence is that of Aspartyl/glutamyl-tRNA(Asn/Gln) amidotransferase subunit C from Lactiplantibacillus plantarum (strain ATCC BAA-793 / NCIMB 8826 / WCFS1) (Lactobacillus plantarum).